A 154-amino-acid polypeptide reads, in one-letter code: MAPAKADPSKKSDPKAQAAKVAKAVKSGSTLKKKSQKIRTKVTFHRPKTLKKDRNPKYPRISAPGRNKLDQYGILKYPLTTESAMKKIEDNNTLVFIVDIKADKKKIKDAVKKMYDIQTKKVNTLIRPDGTKKAYVRLTPDYDALDVANKIGII.

Residues 1-39 are disordered; sequence MAPAKADPSKKSDPKAQAAKVAKAVKSGSTLKKKSQKIR. The span at 15–26 shows a compositional bias: low complexity; the sequence is KAQAAKVAKAVK.

The protein belongs to the universal ribosomal protein uL23 family.

In terms of biological role, this protein binds to a specific region on the 26S rRNA. This chain is Large ribosomal subunit protein uL23 (RPL23A), found in Nicotiana tabacum (Common tobacco).